The chain runs to 602 residues: Arginine--tRNA ligase (602 aa).

Residues 138–148 (ANPTGPMHVGH) carry the 'HIGH' region motif.

This sequence belongs to the class-I aminoacyl-tRNA synthetase family. Monomer.

It is found in the cytoplasm. It carries out the reaction tRNA(Arg) + L-arginine + ATP = L-arginyl-tRNA(Arg) + AMP + diphosphate. This chain is Arginine--tRNA ligase, found in Gluconobacter oxydans (strain 621H) (Gluconobacter suboxydans).